The following is an 822-amino-acid chain: Ribonucleoside-diphosphate reductase large subunit (822 aa).

Substrate is bound by residues threonine 249, 264–265, glycine 295, 470–474, and 651–655; these read SC, NLCTE, and PTAAS. Cysteine 265 and cysteine 487 are disulfide-bonded. The active-site Proton acceptor is the asparagine 470. Cysteine 472 functions as the Cysteine radical intermediate in the catalytic mechanism. Glutamate 474 serves as the catalytic Proton acceptor.

The protein belongs to the ribonucleoside diphosphate reductase large chain family. Heterotetramer composed of a homodimer of the large subunit (R1) and a homodimer of the small subunit (R2). Larger multisubunit protein complex are also active, composed of (R1)n(R2)n.

It carries out the reaction a 2'-deoxyribonucleoside 5'-diphosphate + [thioredoxin]-disulfide + H2O = a ribonucleoside 5'-diphosphate + [thioredoxin]-dithiol. In terms of biological role, ribonucleoside-diphosphate reductase holoenzyme provides the precursors necessary for viral DNA synthesis. Allows virus growth in non-dividing cells, as well as reactivation from latency in infected hosts. Catalyzes the biosynthesis of deoxyribonucleotides from the corresponding ribonucleotides. The protein is Ribonucleoside-diphosphate reductase large subunit of Gallus gallus (Chicken).